Reading from the N-terminus, the 287-residue chain is Probable 3-hydroxybutyryl-CoA dehydrogenase (287 aa).

Belongs to the 3-hydroxyacyl-CoA dehydrogenase family.

It catalyses the reaction (3S)-3-hydroxybutanoyl-CoA + NADP(+) = acetoacetyl-CoA + NADPH + H(+). It participates in lipid metabolism; butanoate metabolism. In Bacillus subtilis (strain 168), this protein is Probable 3-hydroxybutyryl-CoA dehydrogenase (mmgB).